A 165-amino-acid chain; its full sequence is Lipoprotein signal peptidase (165 aa).

The next 3 membrane-spanning stretches (helical) occupy residues 9–29 (PFLW…LAVV), 65–85 (WQKY…LFFL), and 97–119 (TGYA…HGFV). Active-site residues include Asp121 and Asp139. Residues 134-154 (VFNIADVAICIGAGLLAIDAF) form a helical membrane-spanning segment.

It belongs to the peptidase A8 family.

The protein localises to the cell inner membrane. It catalyses the reaction Release of signal peptides from bacterial membrane prolipoproteins. Hydrolyzes -Xaa-Yaa-Zaa-|-(S,diacylglyceryl)Cys-, in which Xaa is hydrophobic (preferably Leu), and Yaa (Ala or Ser) and Zaa (Gly or Ala) have small, neutral side chains.. Its pathway is protein modification; lipoprotein biosynthesis (signal peptide cleavage). This protein specifically catalyzes the removal of signal peptides from prolipoproteins. The protein is Lipoprotein signal peptidase of Histophilus somni (strain 129Pt) (Haemophilus somnus).